The following is a 183-amino-acid chain: Hypoxanthine/guanine phosphoribosyltransferase (183 aa).

The protein belongs to the purine/pyrimidine phosphoribosyltransferase family. Archaeal HPRT subfamily. Homodimer.

The protein localises to the cytoplasm. It catalyses the reaction IMP + diphosphate = hypoxanthine + 5-phospho-alpha-D-ribose 1-diphosphate. It carries out the reaction GMP + diphosphate = guanine + 5-phospho-alpha-D-ribose 1-diphosphate. Its pathway is purine metabolism; IMP biosynthesis via salvage pathway; IMP from hypoxanthine: step 1/1. Catalyzes a salvage reaction resulting in the formation of IMP that is energically less costly than de novo synthesis. This Methanothermococcus okinawensis (strain DSM 14208 / JCM 11175 / IH1) protein is Hypoxanthine/guanine phosphoribosyltransferase.